The sequence spans 276 residues: Secreted LysM effector LysM10 (276 aa).

Positions 1–22 (MLLSLVKFGILSVFLLAQEAVA) are cleaved as a signal peptide. Residues Asn-27, Asn-104, and Asn-140 are each glycosylated (N-linked (GlcNAc...) asparagine). In terms of domain architecture, LysM spans 219 to 264 (KTYIAKEDDTCKSISEAQSISTDRLVEVNHLDYSCSSLTSGTALCI). N-linked (GlcNAc...) asparagine glycosylation occurs at Asn-267.

The protein belongs to the secreted LysM effector family.

Its subcellular location is the secreted. Its function is as follows. Secreted LysM effector that might have a role in sequestration of chitin oligosaccharides (breakdown products of fungal cell walls that are released during invasion and act as triggers of host immunity) to dampen host defense. This chain is Secreted LysM effector LysM10, found in Penicillium expansum (Blue mold rot fungus).